Consider the following 93-residue polypeptide: Progonadoliberin-2 (93 aa).

A signal peptide spans methionine 1–glycine 24. Position 25 is a pyrrolidone carboxylic acid (glutamine 25). Glycine 34 carries the post-translational modification Glycine amide.

The protein belongs to the GnRH family. In terms of tissue distribution, midbrain and hindbrain.

It localises to the secreted. In terms of biological role, stimulates the secretion of gonadotropins. The chain is Progonadoliberin-2 (gnrh2) from Aquarana catesbeiana (American bullfrog).